The following is a 126-amino-acid chain: Acidic phospholipase A2 2 (126 aa).

Positions 1–7 (SNRPMPL) are excised as a propeptide. Disulfide bonds link cysteine 18/cysteine 78, cysteine 33/cysteine 125, cysteine 35/cysteine 51, cysteine 50/cysteine 106, cysteine 57/cysteine 99, cysteine 67/cysteine 92, and cysteine 85/cysteine 97. Tyrosine 34, glycine 36, and glycine 38 together coordinate Ca(2+). Histidine 54 is a catalytic residue. Residue aspartate 55 coordinates Ca(2+). The active site involves aspartate 100.

It belongs to the phospholipase A2 family. Group I subfamily. D49 sub-subfamily. As to quaternary structure, heterodimer formed between two homologous isoforms: isoform 1 and isoform 2. It depends on Ca(2+) as a cofactor. As to expression, expressed by the venom gland.

It localises to the secreted. The enzyme catalyses a 1,2-diacyl-sn-glycero-3-phosphocholine + H2O = a 1-acyl-sn-glycero-3-phosphocholine + a fatty acid + H(+). PLA2 catalyzes the calcium-dependent hydrolysis of the 2-acyl groups in 3-sn-phosphoglycerides. This Naja sagittifera (Andaman cobra) protein is Acidic phospholipase A2 2.